The sequence spans 156 residues: Small ribosomal subunit protein uS7 (156 aa).

It belongs to the universal ribosomal protein uS7 family. Part of the 30S ribosomal subunit. Contacts proteins S9 and S11.

Functionally, one of the primary rRNA binding proteins, it binds directly to 16S rRNA where it nucleates assembly of the head domain of the 30S subunit. Is located at the subunit interface close to the decoding center, probably blocks exit of the E-site tRNA. The chain is Small ribosomal subunit protein uS7 from Bacillus cytotoxicus (strain DSM 22905 / CIP 110041 / 391-98 / NVH 391-98).